The chain runs to 156 residues: Small ribosomal subunit protein uS7 (156 aa).

It belongs to the universal ribosomal protein uS7 family. Part of the 30S ribosomal subunit. Contacts proteins S9 and S11.

One of the primary rRNA binding proteins, it binds directly to 16S rRNA where it nucleates assembly of the head domain of the 30S subunit. Is located at the subunit interface close to the decoding center, probably blocks exit of the E-site tRNA. This Methylobacterium radiotolerans (strain ATCC 27329 / DSM 1819 / JCM 2831 / NBRC 15690 / NCIMB 10815 / 0-1) protein is Small ribosomal subunit protein uS7.